The sequence spans 398 residues: tRNA N6-adenosine threonylcarbamoyltransferase (398 aa).

A divalent metal cation-binding residues include His162, His166, and Tyr183. Substrate-binding positions include 183–187, Asp215, Gly230, Glu234, and Asn329; that span reads YVSGG. Asp357 contacts a divalent metal cation.

The protein belongs to the KAE1 / TsaD family. As to quaternary structure, component of the EKC/KEOPS complex composed of at least BUD32, CGI121, GON7, KAE1 and PCC1; the whole complex dimerizes. A divalent metal cation serves as cofactor.

It is found in the cytoplasm. The protein localises to the nucleus. The enzyme catalyses L-threonylcarbamoyladenylate + adenosine(37) in tRNA = N(6)-L-threonylcarbamoyladenosine(37) in tRNA + AMP + H(+). Its function is as follows. Component of the EKC/KEOPS complex that is required for the formation of a threonylcarbamoyl group on adenosine at position 37 (t(6)A37) in tRNAs that read codons beginning with adenine. The complex is probably involved in the transfer of the threonylcarbamoyl moiety of threonylcarbamoyl-AMP (TC-AMP) to the N6 group of A37. KAE1 likely plays a direct catalytic role in this reaction, but requires other protein(s) of the complex to fulfill this activity. The EKC/KEOPS complex also promotes both telomere uncapping and telomere elongation. The complex is required for efficient recruitment of transcriptional coactivators. The polypeptide is tRNA N6-adenosine threonylcarbamoyltransferase (Cryptococcus neoformans var. neoformans serotype D (strain B-3501A) (Filobasidiella neoformans)).